We begin with the raw amino-acid sequence, 352 residues long: Protein TIFY 6B (352 aa).

The disordered stretch occupies residues 1–71 (MERDFLGLGS…KSGNYHLPHS (71 aa)). A compositionally biased stretch (basic and acidic residues) spans 17 to 26 (VKEETSESSR). A compositionally biased stretch (polar residues) spans 34–54 (MNWSFSNKVSASSSQFLSFRP). The region spanning 172-207 (PIGSPAQLTIFYAGSVCVYDDISPEKAKAIMLLAGN) is the Tify domain. The short motif at 302–326 (PLARKASLARFLEKRKERVTSVSPY) is the Jas element. The Nuclear localization signal motif lies at 304 to 311 (ARKASLAR).

The protein belongs to the TIFY/JAZ family. As to quaternary structure, homo- and heterodimer. Interacts with COI1, MYC2, MYC3, MYC4, TIFY10A/JAZ1, TIFY10B/JAZ2, TIFY6A/JAZ4, TIFY5A/JAZ8, TIFY7/JAZ9, TIFY9/JAZ10 and TIFY3A/JAZ11. Interacts (via TIFY domain) with AFPH2/NINJA. Ubiquitinated. Targeted for degradation by the SCF(COI1) E3 ubiquitin ligase-proteasome pathway during jasmonate signaling. As to expression, srtongly expressed in root tips.

Its subcellular location is the nucleus. Its function is as follows. Repressor of jasmonate responses. Jasmonoyl-isoleucine (JA-Ile) specifically promotes COI1-TIFY6B/JAZ3 interaction. Acts as a negative regulator of MYC2 function. Feed-back regulated by MYC2. This Arabidopsis thaliana (Mouse-ear cress) protein is Protein TIFY 6B (TIFY6B).